The sequence spans 1453 residues: DNA-directed RNA polymerase IV subunit 1 (1453 aa).

7 residues coordinate Zn(2+): C56, C59, C67, H70, C97, C100, and C121. Residues D447, D449, and D451 each coordinate Mg(2+). Residues 806-818 (PLESFVHSVTSRD) form a bridging helix region.

This sequence belongs to the RNA polymerase beta' chain family. Component of the RNA polymerase IV complex. Interacts with NRPD2, NRPD3, NRPD3B, NRPD4, NRPD5, NRPD5B, NRPD6A, NRPD7, NRPD7B, NRPD9A, NRPD9B, NRPD10, NRPD11, NRPD12, RDR2, RDM4, CLSY1, CLSY2, CLSY3, CLSY4 and SHH1. In terms of tissue distribution, mostly expressed in flowers, and, to a lower extent, in leaves.

It is found in the nucleus. The catalysed reaction is RNA(n) + a ribonucleoside 5'-triphosphate = RNA(n+1) + diphosphate. Its function is as follows. DNA-dependent RNA polymerase catalyzes the transcription of DNA into RNA using the four ribonucleoside triphosphates as substrates. Largest and catalytic component of RNA polymerase IV which mediates 24-nt short-interfering RNAs (siRNA) accumulation. Implicated in siRNA-directed heterochromatin formation through the action of DCL3 and AGO4, and subsequent DNA methylation-dependent silencing of targeted sequences. Essential component of a self-reinforcing loop coupling de novo DNA methylation to siRNA production. Required for intercellular but not intracellular RNA interference (RNAi) leading to systemic post-transcriptional gene silencing. Involved in the maintenance of post-transcriptional RNA silencing. This Arabidopsis thaliana (Mouse-ear cress) protein is DNA-directed RNA polymerase IV subunit 1 (NRPD1).